Reading from the N-terminus, the 195-residue chain is Fe/S biogenesis protein NfuA (195 aa).

The [4Fe-4S] cluster site is built by C152 and C155.

Belongs to the NfuA family. Homodimer. The cofactor is [4Fe-4S] cluster.

Functionally, involved in iron-sulfur cluster biogenesis. Binds a 4Fe-4S cluster, can transfer this cluster to apoproteins, and thereby intervenes in the maturation of Fe/S proteins. Could also act as a scaffold/chaperone for damaged Fe/S proteins. This is Fe/S biogenesis protein NfuA from Vibrio cholerae serotype O1 (strain ATCC 39541 / Classical Ogawa 395 / O395).